The following is a 290-amino-acid chain: Shikimate dehydrogenase (NADP(+)) (290 aa).

Residues 22–24 and Thr68 each bind shikimate; that span reads SLS. The active-site Proton acceptor is the Lys72. Asp84 contacts NADP(+). Shikimate is bound by residues Asn93 and Asp108. Residues 133 to 137 and Ile228 contribute to the NADP(+) site; that span reads GSGGS. Tyr230 is a shikimate binding site. Gly251 is a binding site for NADP(+).

Belongs to the shikimate dehydrogenase family. Homodimer.

The enzyme catalyses shikimate + NADP(+) = 3-dehydroshikimate + NADPH + H(+). Its pathway is metabolic intermediate biosynthesis; chorismate biosynthesis; chorismate from D-erythrose 4-phosphate and phosphoenolpyruvate: step 4/7. Functionally, involved in the biosynthesis of the chorismate, which leads to the biosynthesis of aromatic amino acids. Catalyzes the reversible NADPH linked reduction of 3-dehydroshikimate (DHSA) to yield shikimate (SA). The chain is Shikimate dehydrogenase (NADP(+)) from Leptospira interrogans serogroup Icterohaemorrhagiae serovar Lai (strain 56601).